The chain runs to 291 residues: MEMO1 family protein PH1626 (291 aa).

This sequence belongs to the MEMO1 family.

In Pyrococcus horikoshii (strain ATCC 700860 / DSM 12428 / JCM 9974 / NBRC 100139 / OT-3), this protein is MEMO1 family protein PH1626.